Reading from the N-terminus, the 648-residue chain is EF-hand domain-containing protein 1 (648 aa).

Residues M1–M45 form a required for its localization in the mitotic spindle and interaction with alpha-tubulin region. DM10 domains follow at residues D93–G198, D239–F359, and D416–A520. The EF-hand domain maps to S582 to P617.

As to quaternary structure, microtubule inner protein component of sperm flagellar doublet microtubules. Interacts with the C-terminus of CACNA1E. Interacts with alpha-tubulin. In terms of tissue distribution, expressed in adult brain including hippocampus, cerebellum, cerebral cortex, thalamus, hypothalamus, amygdala and upper brainstem. Expressed in soma and dentrites of pyramidal neurons of the hippocampal CA1 region, pyramidal neurons of the cerebral cortex and Purkinje cells of cerebellum. Highly expressed in testis, trachea, and oviduct, moderately in lung, and slightly in brain. Highly expressed in sperm flagella and tracheal cilia (at protein level).

Its subcellular location is the cytoplasm. It is found in the cytoskeleton. The protein resides in the cilium axoneme. It localises to the flagellum axoneme. The protein localises to the microtubule organizing center. Its subcellular location is the centrosome. It is found in the spindle. The protein resides in the spindle pole. Functionally, microtubule inner protein (MIP) part of the dynein-decorated doublet microtubules (DMTs) in cilia axoneme, which is required for motile cilia beating. Microtubule-associated protein which regulates cell division and neuronal migration during cortical development. Necessary for radial and tangential cell migration during brain development, possibly acting as a regulator of cell morphology and process formation during migration. May enhance calcium influx through CACNA1E and stimulate programmed cell death. Overexpression of EFHC1 in hippocampal primary culture neurons induced apoptosis. The protein is EF-hand domain-containing protein 1 (Efhc1) of Mus musculus (Mouse).